A 351-amino-acid polypeptide reads, in one-letter code: Holliday junction branch migration complex subunit RuvB (351 aa).

The segment at methionine 1–tyrosine 186 is large ATPase domain (RuvB-L). ATP-binding positions include isoleucine 25, arginine 26, glycine 67, lysine 70, threonine 71, threonine 72, glutamate 133 to phenylalanine 135, arginine 176, tyrosine 186, and arginine 223. Residue threonine 71 participates in Mg(2+) binding. Residues arginine 187–asparagine 257 form a small ATPAse domain (RuvB-S) region. The tract at residues isoleucine 260–glutamate 351 is head domain (RuvB-H). DNA-binding residues include arginine 296, arginine 315, and arginine 320.

The protein belongs to the RuvB family. Homohexamer. Forms an RuvA(8)-RuvB(12)-Holliday junction (HJ) complex. HJ DNA is sandwiched between 2 RuvA tetramers; dsDNA enters through RuvA and exits via RuvB. An RuvB hexamer assembles on each DNA strand where it exits the tetramer. Each RuvB hexamer is contacted by two RuvA subunits (via domain III) on 2 adjacent RuvB subunits; this complex drives branch migration. In the full resolvosome a probable DNA-RuvA(4)-RuvB(12)-RuvC(2) complex forms which resolves the HJ.

The protein resides in the cytoplasm. The enzyme catalyses ATP + H2O = ADP + phosphate + H(+). In terms of biological role, the RuvA-RuvB-RuvC complex processes Holliday junction (HJ) DNA during genetic recombination and DNA repair, while the RuvA-RuvB complex plays an important role in the rescue of blocked DNA replication forks via replication fork reversal (RFR). RuvA specifically binds to HJ cruciform DNA, conferring on it an open structure. The RuvB hexamer acts as an ATP-dependent pump, pulling dsDNA into and through the RuvAB complex. RuvB forms 2 homohexamers on either side of HJ DNA bound by 1 or 2 RuvA tetramers; 4 subunits per hexamer contact DNA at a time. Coordinated motions by a converter formed by DNA-disengaged RuvB subunits stimulates ATP hydrolysis and nucleotide exchange. Immobilization of the converter enables RuvB to convert the ATP-contained energy into a lever motion, pulling 2 nucleotides of DNA out of the RuvA tetramer per ATP hydrolyzed, thus driving DNA branch migration. The RuvB motors rotate together with the DNA substrate, which together with the progressing nucleotide cycle form the mechanistic basis for DNA recombination by continuous HJ branch migration. Branch migration allows RuvC to scan DNA until it finds its consensus sequence, where it cleaves and resolves cruciform DNA. This Coxiella burnetii (strain RSA 331 / Henzerling II) protein is Holliday junction branch migration complex subunit RuvB.